A 551-amino-acid chain; its full sequence is L-lactate permease (551 aa).

The next 13 helical transmembrane spans lie at 13 to 33 (NIWLSSLIASLPILFFFFALI), 37 to 57 (LKGYVAASWTVAIALAVALLF), 69 to 89 (VVYGFFYGLWPIAWIIIAAVF), 131 to 151 (GAAGFGAPVAITAALLVGLGF), 159 to 179 (LCLIVNTAPVAFGAMGIPILV), 194 to 214 (MVGRQLPFMTIIVLFWIMAIM), 220 to 240 (IKETWPAVVVAGGSFAIAQYL), 244 to 264 (FIGPELPDIISSLVSLLCLTL), 366 to 386 (FDWFSATGTAILFAALLSIVW), 405 to 425 (LALPIYSIGMVLAFAFISNYS), 438 to 458 (TGHAFTFFSPFLGWLGVFLTG), 494 to 514 (VTGKMISPQSIAIACAAVGLV), and 530 to 550 (IFTCIVGVITTLQAYVLTWMI).

This sequence belongs to the lactate permease family.

It is found in the cell inner membrane. It carries out the reaction (S)-lactate(in) + H(+)(in) = (S)-lactate(out) + H(+)(out). It catalyses the reaction (R)-lactate(in) + H(+)(in) = (R)-lactate(out) + H(+)(out). The catalysed reaction is glycolate(in) + H(+)(in) = glycolate(out) + H(+)(out). Inhibited by the proton ionophore carbonyl cyanide m-chlorophenylhydrazone (CCCP). Uptake of L-lactate across the membrane. Can also transport D-lactate and glycolate. Seems to be driven by a proton motive force. The chain is L-lactate permease from Escherichia coli (strain K12).